A 159-amino-acid polypeptide reads, in one-letter code: Succinate dehydrogenase [ubiquinone] cytochrome b small subunit, mitochondrial (159 aa).

A mitochondrion-targeting transit peptide spans 1-56; that stretch reads MAVLLKLGVLCSGQGARALSLRSRAVRPAFVSAFLQDQPTPGWRGTQHIHLSPSHQ. At 57-63 the chain is on the mitochondrial matrix side; the sequence is SGSKAAS. A helical transmembrane segment spans residues 64-85; that stretch reads LHWTSERVVSVLLLGLIPAGYL. The Mitochondrial intermembrane segment spans residues 86–90; that stretch reads NPCSV. The helical transmembrane segment at 91 to 111 threads the bilayer; sequence VDYSLAAALTLHSHWGIGQVV. Residue histidine 102 coordinates heme b. Topologically, residues 112 to 120 are mitochondrial matrix; it reads TDYVHGDAL. An a ubiquinone-binding site is contributed by tyrosine 114. The helical transmembrane segment at 121-142 threads the bilayer; sequence QKATKAGLLAVSALTFAGLCYF. At 143-159 the chain is on the mitochondrial intermembrane side; the sequence is NYHDVGICRAVAMLWKL.

It belongs to the CybS family. In terms of assembly, component of complex II composed of four subunits: the flavoprotein (FP) SDHA, iron-sulfur protein (IP) SDHB, and a cytochrome b560 composed of SDHC and SDHD.

It is found in the mitochondrion inner membrane. Its pathway is carbohydrate metabolism; tricarboxylic acid cycle. Membrane-anchoring subunit of succinate dehydrogenase (SDH) that is involved in complex II of the mitochondrial electron transport chain and is responsible for transferring electrons from succinate to ubiquinone (coenzyme Q). SDH also oxidizes malate to the non-canonical enol form of oxaloacetate, enol-oxaloacetate. Enol-oxaloacetate, which is a potent inhibitor of the succinate dehydrogenase activity, is further isomerized into keto-oxaloacetate. The polypeptide is Succinate dehydrogenase [ubiquinone] cytochrome b small subunit, mitochondrial (Sdhd) (Rattus norvegicus (Rat)).